The sequence spans 561 residues: MVILEFLQTLLRNNPEIALFLAIAIGYWIGKFRFGSLQIGGVAGSLLAAVLISQIGIHIDSGLKTVLFALFIYAVGFQSGPQFFKSLGRQSLREVLMAFVLAISGLFTVLAVARMFHLDKGLAAGVAAGGLTQSAIIGTASSALEKLGLPLAQTQMLQGHVAVGYAVTYIFGSLAPIIICVNILPWLMKRGLREDALTAEAEQMQGMAVYGDGERPALSEFVSRVYQVKKAGQSVQQIESDHVTVEQIRRQKNLVAVTQDSTVEAGDLLLLFGHRADVISTGELLGEEIKQPPHDMDVVIVRHDVLLTNKAFVGKSVAECSQILSQVARHGVYFLGLKRGDKTLPLTSDLHILSGDIVTLYGTRQDVDRVAKELGSLLTRSLKTDLVFHGVGLVVGLLIGLIVVRLGSIPLTLGSGGGALLSGLLFGWYQNRHSKSGNMPMAASTLLVDFGLSGFVAVTGLQTGQQAVTTIMQQGITLFMLGVVVSIVPLIITMLFGRYVLQYKNTAVFAGALAGSRSANPALGEILNKAGNAVPTTSFAITYAIANVLLTLLGPLVVAFS.

6 helical membrane-spanning segments follow: residues 10 to 29, 34 to 56, 63 to 80, 95 to 117, 122 to 144, and 164 to 186; these read LLRNNPEIALFLAIAIGYWI, FGSLQIGGVAGSLLAAVLISQIG, LKTVLFALFIYAVGFQSG, VLMAFVLAISGLFTVLAVARMFH, LAAGVAAGGLTQSAIIGTASSAL, and GYAVTYIFGSLAPIIICVNILPW. RCK C-terminal domains are found at residues 205-287 and 294-376; these read QGMA…LLGE and HDMD…ELGS. 5 consecutive transmembrane segments (helical) span residues 386–403, 407–429, 442–464, 479–501, and 538–560; these read LVFHGVGLVVGLLIGLIV, GSIPLTLGSGGGALLSGLLFGWY, AASTLLVDFGLSGFVAVTGLQTG, FMLGVVVSIVPLIITMLFGRYVL, and SFAITYAIANVLLTLLGPLVVAF.

Belongs to the AAE transporter (TC 2.A.81) family.

The protein resides in the cell membrane. This is an uncharacterized protein from Zymomonas mobilis subsp. mobilis (strain ATCC 31821 / ZM4 / CP4).